We begin with the raw amino-acid sequence, 65 residues long: Large ribosomal subunit protein bL35 (65 aa).

Disordered stretches follow at residues 1 to 23 (MPKLKTKSGAAKRFKKTGKGGFK) and 36 to 65 (MTTKRKRHLRGMNQVAKVDTTSLVQQMPYA). Polar residues predominate over residues 54-65 (DTTSLVQQMPYA).

Belongs to the bacterial ribosomal protein bL35 family.

The protein is Large ribosomal subunit protein bL35 of Francisella tularensis subsp. tularensis (strain FSC 198).